A 139-amino-acid chain; its full sequence is Hydrogenase maturation factor HypA (139 aa).

His2 is a Ni(2+) binding site. Zn(2+) is bound by residues Cys75, Cys78, Cys111, and Cys114.

This sequence belongs to the HypA/HybF family.

In terms of biological role, involved in the maturation of [NiFe] hydrogenases. Required for nickel insertion into the metal center of the hydrogenase. This chain is Hydrogenase maturation factor HypA, found in Ignicoccus hospitalis (strain KIN4/I / DSM 18386 / JCM 14125).